The following is a 154-amino-acid chain: uncharacterized protein (154 aa).

Positions 1 to 21 (MSISSGSFAQPAAVVSSPGVT) are cleaved as a signal peptide.

Belongs to the ivy family.

Its subcellular location is the periplasm. This is an uncharacterized protein from Yersinia pestis.